We begin with the raw amino-acid sequence, 454 residues long: uncharacterized protein (454 aa).

Residues C73, C79, C82, and C154 each coordinate [4Fe-4S] cluster. 4 residues coordinate S-adenosyl-L-methionine: Q279, F307, D328, and D381. Residue C408 is the Nucleophile of the active site.

This sequence belongs to the class I-like SAM-binding methyltransferase superfamily. RNA M5U methyltransferase family.

This is an uncharacterized protein from Leptospira interrogans serogroup Icterohaemorrhagiae serovar copenhageni (strain Fiocruz L1-130).